A 247-amino-acid chain; its full sequence is 2,3-bisphosphoglycerate-dependent phosphoglycerate mutase (247 aa).

Residues 13-20, 26-27, R65, 92-95, K103, 119-120, and 186-187 each bind substrate; these read RHGESDWN, TG, ERHY, RR, and GN. Residue H14 is the Tele-phosphohistidine intermediate of the active site. E92 (proton donor/acceptor) is an active-site residue.

This sequence belongs to the phosphoglycerate mutase family. BPG-dependent PGAM subfamily. Homotetramer, dimer of dimers.

The catalysed reaction is (2R)-2-phosphoglycerate = (2R)-3-phosphoglycerate. It participates in carbohydrate degradation; glycolysis; pyruvate from D-glyceraldehyde 3-phosphate: step 3/5. In terms of biological role, catalyzes the interconversion of 2-phosphoglycerate and 3-phosphoglycerate. In Mycobacterium leprae (strain Br4923), this protein is 2,3-bisphosphoglycerate-dependent phosphoglycerate mutase.